The following is a 476-amino-acid chain: 3-isopropylmalate dehydratase large subunit (476 aa).

[4Fe-4S] cluster contacts are provided by C357, C417, and C420.

Belongs to the aconitase/IPM isomerase family. LeuC type 1 subfamily. In terms of assembly, heterodimer of LeuC and LeuD. [4Fe-4S] cluster serves as cofactor.

It carries out the reaction (2R,3S)-3-isopropylmalate = (2S)-2-isopropylmalate. Its pathway is amino-acid biosynthesis; L-leucine biosynthesis; L-leucine from 3-methyl-2-oxobutanoate: step 2/4. Functionally, catalyzes the isomerization between 2-isopropylmalate and 3-isopropylmalate, via the formation of 2-isopropylmaleate. This chain is 3-isopropylmalate dehydratase large subunit, found in Mycobacterium avium (strain 104).